Here is a 156-residue protein sequence, read N- to C-terminus: DNA mismatch endonuclease Vsr (156 aa).

Residues aspartate 51 and threonine 63 each contribute to the Mg(2+) site.

The protein belongs to the Vsr family. It depends on Mg(2+) as a cofactor. Zn(2+) serves as cofactor.

In terms of biological role, deamination of 5-methylcytosine in DNA results in T/G mismatches. If unrepaired, these mismatches can lead to C-to-T transition mutations. The very short patch (VSP) repair process in E.coli counteracts the mutagenic process by repairing the mismatches in favor of the G-containing strand. This enzyme is an endonuclease that nicks double-stranded DNA within the sequence CT(AT)GN or NT(AT)GG next to the thymidine residue that is mismatched to 2'-deoxyguanosine. The incision is mismatch-dependent and strand-specific. This is DNA mismatch endonuclease Vsr from Escherichia coli (strain K12).